The following is a 509-amino-acid chain: O-acetyltransferase anaAT (509 aa).

The protein belongs to the fumigaclavine B O-acetyltransferase family. In terms of assembly, monomer.

It carries out the reaction (2R,3S,11R)-aszonalenin + acetyl-CoA = (2R,3S,11R)-acetylaszonalenin + CoA. It participates in alkaloid biosynthesis. Its function is as follows. O-acetyltransferase; part of the gene cluster that mediates the biosynthesis of the prenylated pyrroloindoline diketopiperazine acetylaszonalenin. The first step in the pathway is the formation of (R)-benzodiazepinedione by condensation of tryptophan and anthranilic acid catalyzed by the non-ribosomal peptide synthetase anaPS. The prenyltransferase anaPT then converts (R)-benzodiazepinedione to aszonalenin in the presence of dimethylallyl diphosphate (DMAPP) via C3-prenylation. The last step in the biosynthesis of acetylaszonalenin via acetylation of aszonalenin at position N1 catalyzed by anaAT. This is O-acetyltransferase anaAT from Neosartorya fischeri (strain ATCC 1020 / DSM 3700 / CBS 544.65 / FGSC A1164 / JCM 1740 / NRRL 181 / WB 181) (Aspergillus fischerianus).